Consider the following 139-residue polypeptide: Large ribosomal subunit protein uL16 (139 aa).

A disordered region spans residues 1 to 21; the sequence is MLMPKRVQYRKTQRGRMKGNA. Residues 7–17 are compositionally biased toward basic residues; it reads VQYRKTQRGRM.

Belongs to the universal ribosomal protein uL16 family. Part of the 50S ribosomal subunit.

Functionally, binds 23S rRNA and is also seen to make contacts with the A and possibly P site tRNAs. The chain is Large ribosomal subunit protein uL16 from Chlorobaculum tepidum (strain ATCC 49652 / DSM 12025 / NBRC 103806 / TLS) (Chlorobium tepidum).